A 167-amino-acid chain; its full sequence is Probable host range protein 2 (167 aa).

It belongs to the poxviridae C7 protein family.

Functionally, plays a role for multiplication of the virus in different cell types. The protein is Probable host range protein 2 of Yaba monkey tumor virus (strain VR587) (YMTV).